We begin with the raw amino-acid sequence, 3744 residues long: SAGA complex/NuA4 acetyltransferase complex subunit TRA1 (3744 aa).

S2 is subject to N-acetylserine. HEAT repeat units lie at residues 2 to 40 (SLTEQIEQFASRFRDDDATLQSRYSTLSELYDIMELLNS), 46 to 92 (FFLQ…NQTF), 94 to 131 (PYAMEVLEFLLSVLPKENEENGILCMKVLTTLFKSFKS), and 135 to 172 (DKLDSFIRIIIQIYKNTPNLINQTFYEAGKAEQGDLDS). Residues 2-2598 (SLTEQIEQFA…KPYHTRQISS (2597 aa)) form an HEAT region. S172 carries the post-translational modification Phosphoserine. Positions 185-195 (FSKNDEEKDFP) are enriched in basic and acidic residues. The interval 185–212 (FSKNDEEKDFPSKQSSTEPRFENSTSSN) is disordered. The span at 196-212 (SKQSSTEPRFENSTSSN) shows a compositional bias: polar residues. 3 HEAT repeats span residues 247 to 284 (PEFTPLIMNLLNIQIKQQQEAREQAESRGEHFTSISTE), 319 to 357 (QDYVNFVPDLIIRLLQDCPSELSSARKELLHATRHILST), and 437 to 477 (KLLL…RFKT). The span at 522–539 (LEPSDDDHLMPQPKKEDI) shows a compositional bias: basic and acidic residues. The interval 522 to 546 (LEPSDDDHLMPQPKKEDINDSPDVE) is disordered. S542 carries the phosphoserine modification. 20 HEAT repeats span residues 588 to 628 (RTLM…VFSY), 734 to 771 (PNFAGILLRFLKGKLKDLGNVDFNTSNVLIRLFKLSFM), 779 to 821 (INEV…SIGG), 829 to 867 (RSIKPILQVLLQSLNQMILTARLPHERELYVELCITVPV), 870 to 910 (SVLA…NLTA), 919 to 958 (PVIDDVSKALFNLLQPQPFNHAISHNVVRILGKLGGRNRQ), 1074 to 1112 (NQENLFLRLLESVFYATSIKELKDDAMDLLNNLLDHFCL), 1188 to 1225 (SFIPELAKQFIHLCYDETYYNKRGGVLGIKVLIDNVKS), 1283 to 1320 (KVLENTLTDIVCELSNANPKVRNACQKSLHTISNLTGI), 1369 to 1408 (TFNEELFRLLQESIVLADAEDESLSTNIQKTTEYSTSEQL), 1435 to 1472 (NIRIRILAVFFKTMLKTSPEIINTTYEALKGSLAENSK), 1476 to 1512 (ELLQNGLKPLLMNLSDHQKLTVPGLDALSKLLELLIA), 1693 to 1734 (LKLK…RFTE), 1739 to 1776 (DQNPLLLDFIDFSFSNGIKASYSLKKFIFHNIIASSNK), 1918 to 1955 (FPIKVVTQVFVALLRSSHVEARYLVKQSLDVLTPVLHE), 2115 to 2155 (ELGL…LDSE), 2182 to 2219 (ENLPTIQNLLEKCIKSDHHDVQEALQKVLQVIMKAIKA), 2230 to 2267 (SPGKTFIQMLTSVITQDLQETSSVTAGVTLAWVLFMNF), 2269 to 2307 (DNIVPLLTPLMKTFSKLCKDHLSISQPKDAMALEEARIT), and 2536 to 2573 (IISSDFIDSLIEIFYQDPKAIHRAWVTLFPQVYKSIPK). A head region spans residues 2599-3744 (RTNVINMLLD…RTDVNFMPWF (1146 aa)). The 556-residue stretch at 2622–3177 (LVKYLAISYN…HFQLRTTKED (556 aa)) folds into the FAT domain. Residues 3374–3732 (FLPTVDFVRG…CIGSAVSPRN (359 aa)) form the PI3K/PI4K catalytic domain. The interval 3380-3386 (FVRGTHS) is G-loop. Residues 3563-3571 (MINNRTPHK) form a catalytic loop region. Residues 3600 to 3625 (LKNHDLSLPPDSPIFHNNEPVPFRLT) form an activation loop region. The 33-residue stretch at 3712-3744 (TPTVTTQFILDCIGSAVSPRNLARTDVNFMPWF) folds into the FATC domain.

It belongs to the PI3/PI4-kinase family. TRA1 subfamily. In terms of assembly, component of the 1.8 MDa SAGA (Spt-Ada-Gcn5 acetyltransferase) complex, which is composed of 19 subunits TRA1, SPT7, TAF5, NGG1/ADA3, SGF73, SPT20/ADA5, SPT8, TAF12, TAF6, HFI1/ADA1, UBP8, GCN5, ADA2, SPT3, SGF29, TAF10, TAF9, SGF11 and SUS1. The SAGA complex is composed of 4 modules, namely the HAT (histone acetyltransferase) module (GCN5, ADA2, NGG1/ADA3 and SGF29), the DUB (deubiquitinating) module (UBP8, SGF11, SGF73 and SUS1), the core or TAF (TBP-associated factor) module (TAF5, TAF6, TAF9, TAF10 and TAF12), and the Tra1 or SPT (Suppressor of Ty) module (TRA1, HFI1/ADA1, SPT3, SPT7, SPT8 and SPT20/ADA5). The Tra1/SPT module binds activators, the core module recruits TBP (TATA-binding protein), the HAT module contains the histone H3 acetyltransferase GCN5, and the DUB module comprises the histone H2B deubiquitinase UBP8. Also identified in an altered form of SAGA, named SALSA (SAGA altered, Spt8 absent) or SLIK (SAGA-like) complex, which contains a C-terminal truncated form of SPT7 and is missing SPT8. However, it has been shown that the SAGA and SAGA-like SALSA/SLIK transcriptional coactivators are structurally and biochemically equivalent. Component of the NuA4 acetyltransferase complex, which consists of the catalytic subunit ESA1 and the 12 non-catalytic subunits ACT1, ARP4, EAF1/VID21, SWC4/EAF2, EAF3, EAF5, EAF6, EAF7, EPL1, TRA1, YAF9 and YNG2. TRA1 is the scaffold subunit for binding to a variety of transcription activators or transcription factors to recruit NuA4 for targeted gene activation. Identified in the Ada.spt complex with NGG1/ADA3 and SPT7.

Its subcellular location is the nucleus. Functionally, essential scaffold subunit of the transcription coactivator SAGA complex. SAGA acts as a general cofactor required for essentially all RNA polymerase II transcription. At the promoters, SAGA is required for transcription pre-initiation complex (PIC) recruitment. It influences RNA polymerase II transcriptional activity through different activities such as TBP interaction (via core/TAF module) and promoter selectivity, interaction with transcription activators (via Tra1/SPT module), and chromatin modification through histone acetylation (via HAT module) and deubiquitination (via DUB module). SAGA preferentially acetylates histones H3 (to form H3K9ac, H3K14ac, H3K18ac and H3K23ac) and H2B and deubiquitinates histone H2B. SAGA interacts with DNA via upstream activating sequences (UASs). Also identified in a modified version of SAGA named SALSA or SLIK. The cleavage of SPT7 and the absence of the SPT8 subunit in SLIK neither drive any major conformational differences in its structure compared with SAGA, nor significantly affect HAT, DUB, or DNA-binding activities. Component of the NuA4 histone H4/H2A acetyltransferase involved in transcription and DNA repair. The sequence is that of SAGA complex/NuA4 acetyltransferase complex subunit TRA1 from Saccharomyces cerevisiae (strain ATCC 204508 / S288c) (Baker's yeast).